The primary structure comprises 72 residues: Metallothionein-like protein type 2 (72 aa).

This sequence belongs to the metallothionein superfamily. Type 15 family.

Metallothioneins have a high content of cysteine residues that bind various heavy metals. This Solanum lycopersicum (Tomato) protein is Metallothionein-like protein type 2.